Here is a 428-residue protein sequence, read N- to C-terminus: UPF0597 protein BF3772 (428 aa).

It belongs to the UPF0597 family.

The chain is UPF0597 protein BF3772 from Bacteroides fragilis (strain YCH46).